The following is a 248-amino-acid chain: Granzyme E (248 aa).

The N-terminal stretch at 1 to 18 (MPPVLILLTLLLPLGAGA) is a signal peptide. Residues 19 to 20 (EE) constitute a propeptide that is removed on maturation. Positions 21 to 246 (IIGGHVVKPH…FLPWISRNMK (226 aa)) constitute a Peptidase S1 domain. The cysteines at positions 50 and 66 are disulfide-linked. Residue His65 is the Charge relay system of the active site. Residues Asn68 and Asn102 are each glycosylated (N-linked (GlcNAc...) asparagine). Catalysis depends on Asp109, which acts as the Charge relay system. 2 disulfides stabilise this stretch: Cys143–Cys210 and Cys175–Cys189. Residue Asn154 is glycosylated (N-linked (GlcNAc...) asparagine). Residue Ser204 is the Charge relay system of the active site. A glycan (N-linked (GlcNAc...) asparagine) is linked at Asn223.

It belongs to the peptidase S1 family. Granzyme subfamily.

It localises to the cytolytic granule. In terms of biological role, this enzyme is probably necessary for target cell lysis in cell-mediated immune responses. The polypeptide is Granzyme E (Gzme) (Mus musculus (Mouse)).